Consider the following 253-residue polypeptide: Small ribosomal subunit protein uS2 (253 aa).

This sequence belongs to the universal ribosomal protein uS2 family.

In Parvibaculum lavamentivorans (strain DS-1 / DSM 13023 / NCIMB 13966), this protein is Small ribosomal subunit protein uS2.